A 633-amino-acid chain; its full sequence is Kinesin-like motor protein 9 (633 aa).

Residues 1–392 form the Kinesin motor domain; that stretch reads MIQIFLRVKK…MRYSANAREI (392 aa). 94 to 101 contributes to the ATP binding site; that stretch reads GVSGAGKT. Disordered regions lie at residues 393–423, 531–556, and 575–633; these read LPPP…TKAL, LEEE…SRKL, and KLWP…INEL. Residues 398–423 are compositionally biased toward polar residues; sequence NENSGSQSPSHSLLQKSKNTSSTKAL. Residues 417–541 are a coiled coil; that stretch reads TSSTKALTSH…EEESIKESSA (125 aa). Positions 578–587 are enriched in polar residues; it reads PQSTLIQAPN. Low complexity predominate over residues 604–623; the sequence is VSPIKPLSPSRRPPLTSLYS. 3 positions are modified to phosphoserine: serine 605, serine 611, and serine 613. Over residues 624–633 the composition is skewed to polar residues; it reads GTTDIDINEL.

The protein belongs to the TRAFAC class myosin-kinesin ATPase superfamily. Kinesin family. In terms of assembly, interacts with ase1. In terms of processing, phosphorylated by cdc2 and dephosphorylated by clp1. Dephosphorylation is required for the interaction with ase1.

Its subcellular location is the nucleus. It localises to the cytoplasm. The protein resides in the cytoskeleton. It is found in the microtubule organizing center. The protein localises to the spindle pole body. In terms of biological role, kinesin-like motor protein involved in anaphase B spindle elongation. The protein is Kinesin-like motor protein 9 (klp9) of Schizosaccharomyces pombe (strain 972 / ATCC 24843) (Fission yeast).